The chain runs to 285 residues: MASYKFKTQNSFLLLLSISFFFLLLLNKVNSTGSLSFSFPKFAPNQPYLIFQRDALVTSTGVLQLTNVVNGVPSRKSLGRALYAAPFQIWDSTTGNVASFVTSFSFIIQAPNPATTADGLAFFLAPVDTQPLDLGGMLGIFKNGYFNKSNQIVAVEFDTFSNRHWDPTGRHMGINVNSIVSVKTVPWNWANGEVANVFISYEASTKSLTASLVYPSLETSFIIHAIVDVKDVLPEWVRFGFSATTGIDTGYVQTNDVLSWSFESNLPGGNSVASVKNAGLSTYAA.

The N-terminal stretch at 1–31 (MASYKFKTQNSFLLLLSISFFFLLLLNKVNS) is a signal peptide. A glycan (N-linked (GlcNAc...) asparagine) is linked at asparagine 147. Mn(2+) is bound by residues glutamate 156 and aspartate 158. The Ca(2+) site is built by aspartate 158, asparagine 162, and aspartate 166. Residues aspartate 166 and histidine 171 each contribute to the Mn(2+) site.

It belongs to the leguminous lectin family. Homotetramer. In terms of processing, mostly found in non-glycosylated form. In terms of tissue distribution, expressed in seed.

In terms of biological role, seed lectin. The polypeptide is Seed agglutinin 2 (Robinia pseudoacacia (Black locust)).